A 121-amino-acid chain; its full sequence is Putative membrane protein insertion efficiency factor (121 aa).

Belongs to the UPF0161 family.

The protein localises to the cell membrane. In terms of biological role, could be involved in insertion of integral membrane proteins into the membrane. This is Putative membrane protein insertion efficiency factor from Rhodococcus opacus (strain B4).